We begin with the raw amino-acid sequence, 725 residues long: Glutamine-dependent NAD(+) synthetase (725 aa).

The CN hydrolase domain occupies 5–275 (VTVATCALNQ…VEVLTATLDL (271 aa)). The active-site Proton acceptor; for glutaminase activity is the glutamate 45. Residue lysine 114 is the For glutaminase activity of the active site. The active-site Nucleophile; for glutaminase activity is the cysteine 175. The interval 325–706 (YHRPEEEISL…KASQTREEQV (382 aa)) is ligase. ATP is bound at residue 355–362 (PLSGGVDS). Residue serine 357 is part of the active site.

In the C-terminal section; belongs to the NAD synthetase family. In terms of assembly, homohexamer. In terms of tissue distribution, highly expressed in small intestine, kidney, liver and testis. Weakly expressed in skeletal muscle, spleen, lung, heart and brain.

It carries out the reaction deamido-NAD(+) + L-glutamine + ATP + H2O = L-glutamate + AMP + diphosphate + NAD(+) + H(+). It participates in cofactor biosynthesis; NAD(+) biosynthesis; NAD(+) from deamido-NAD(+) (L-Gln route): step 1/1. In terms of biological role, catalyzes the final step of the nicotinamide adenine dinucleotide (NAD) de novo synthesis pathway, the ATP-dependent amidation of deamido-NAD using L-glutamine as a nitrogen source. This Mus musculus (Mouse) protein is Glutamine-dependent NAD(+) synthetase (Nadsyn1).